The primary structure comprises 435 residues: Adenylosuccinate synthetase (435 aa).

GTP contacts are provided by residues 11 to 17 (GDEGKGK) and 39 to 41 (GHT). Asp-12 functions as the Proton acceptor in the catalytic mechanism. Mg(2+)-binding residues include Asp-12 and Gly-39. IMP-binding positions include 12-15 (DEGK), 37-40 (NAGH), Thr-128, Arg-142, Gln-223, Thr-238, and Arg-302. Residue His-40 is the Proton donor of the active site. 298-304 (SVTGRPR) provides a ligand contact to substrate. Residues Arg-304, 330-332 (KLD), and 412-414 (STG) each bind GTP.

It belongs to the adenylosuccinate synthetase family. As to quaternary structure, homodimer. Mg(2+) is required as a cofactor.

The protein resides in the cytoplasm. The enzyme catalyses IMP + L-aspartate + GTP = N(6)-(1,2-dicarboxyethyl)-AMP + GDP + phosphate + 2 H(+). Its pathway is purine metabolism; AMP biosynthesis via de novo pathway; AMP from IMP: step 1/2. In terms of biological role, plays an important role in the de novo pathway of purine nucleotide biosynthesis. Catalyzes the first committed step in the biosynthesis of AMP from IMP. The polypeptide is Adenylosuccinate synthetase (Coxiella burnetii (strain CbuK_Q154) (Coxiella burnetii (strain Q154))).